The sequence spans 475 residues: NADH-quinone oxidoreductase subunit N 1 (475 aa).

Transmembrane regions (helical) follow at residues 8-28 (VMPLMTASGISILLILVEAAT), 36-56 (LFAILGFLLVFLSLPFSPSEP), 67-87 (GGFFTYTATVFSIGGLLITLI), 100-120 (GEYYIILFMAVVGMMLMSAAA), 122-142 (LTILFIGLELMSIALYVLAGI), 157-177 (FLLGAFASGIFLYGIALIYGA), 199-219 (FLSGIALLMIGLLFKVAAVPF), 244-264 (AAALSSMILVGISIAPILETF), 268-288 (PTAIAMIATLTMFFGNIAALI), 295-315 (MFAYSSIAHAGYMLIGIATGT), 322-342 (VLYYIFLYTLMNIGAFGIIIL), 366-386 (AFLMAMFMFSLAGIPPFGGFI), 403-423 (LAVAGVIASAVSVSYYLRVVI), and 443-463 (ATIALVAFLVLLFGIYPSLLI).

This sequence belongs to the complex I subunit 2 family. In terms of assembly, NDH-1 is composed of 14 different subunits. Subunits NuoA, H, J, K, L, M, N constitute the membrane sector of the complex.

The protein resides in the cell inner membrane. It carries out the reaction a quinone + NADH + 5 H(+)(in) = a quinol + NAD(+) + 4 H(+)(out). Its function is as follows. NDH-1 shuttles electrons from NADH, via FMN and iron-sulfur (Fe-S) centers, to quinones in the respiratory chain. The immediate electron acceptor for the enzyme in this species is believed to be a menaquinone. Couples the redox reaction to proton translocation (for every two electrons transferred, four hydrogen ions are translocated across the cytoplasmic membrane), and thus conserves the redox energy in a proton gradient. This is NADH-quinone oxidoreductase subunit N 1 from Chloroherpeton thalassium (strain ATCC 35110 / GB-78).